A 182-amino-acid polypeptide reads, in one-letter code: KxDL motif-containing protein 1 (182 aa).

Low complexity predominate over residues 124–135 (TTTATSEQSTES). The interval 124-182 (TTTATSEQSTESCDTSPDVISPTISCCSEDPSQEHTDTPTSDSHEQPVLRDEGPDSADI) is disordered. Basic and acidic residues predominate over residues 155–176 (SQEHTDTPTSDSHEQPVLRDEG).

It belongs to the KXD1 family. In terms of assembly, associates with the BLOC-1 complex.

The protein localises to the lysosome membrane. Its function is as follows. As part of a BORC-like complex may play a role in lysosomes movement and localization at the cell periphery. Associated with the cytosolic face of lysosomes, this complex may couple lysosomes to microtubule plus-end-directed kinesin motor. May also be involved in the biogenesis of lysosome-related organelles such as melanosomes. The chain is KxDL motif-containing protein 1 (kxd1) from Danio rerio (Zebrafish).